We begin with the raw amino-acid sequence, 436 residues long: Elongation factor 1-gamma-A (436 aa).

Residues 2-87 form the GST N-terminal domain; that stretch reads AGGTLYTYPD…YVGNDELRGT (86 aa). One can recognise a GST C-terminal domain in the interval 88-221; sequence TRLHQAQVIQ…KMAQFDAKKF (134 aa). Composition is skewed to basic and acidic residues over residues 221 to 249 and 265 to 278; these read FAEMQPKKETPKKEKPAKEPKKEKEEKKK and SEKALAAEPKSKDP. A disordered region spans residues 221 to 278; that stretch reads FAEMQPKKETPKKEKPAKEPKKEKEEKKKAAPTPAPAPEDDLDESEKALAAEPKSKDP. Residues 275–436 enclose the EF-1-gamma C-terminal domain; sequence SKDPYAHLPK…KPFNQGKIFK (162 aa).

As to quaternary structure, EF-1 is composed of four subunits: alpha, beta, delta, and gamma. Post-translationally, phosphorylated by CDK1. In terms of processing, the N-terminus is blocked.

Its function is as follows. Probably plays a role in anchoring the complex to other cellular components. The sequence is that of Elongation factor 1-gamma-A (eef1g-a) from Xenopus laevis (African clawed frog).